Reading from the N-terminus, the 204-residue chain is MICKDVGVIGYAEALRIQEQLVAKVQQGGEEALLLLEHLPVYTIGAGGSRDNVLDPELEPVRVNRGGDVTYHGPGQLVCYPILDLSRRGRDLHRYLRFLERFLVELCAGLGVACHTVPGRTGVWTGNGKLASIGVGVRRWVSMHGFALNVSPDTAPFSRINPCGMPDCRITSLSLELGEELFVDDLKETVAIRFQPFLHLHLPR.

The BPL/LPL catalytic domain occupies 27–202 (QGGEEALLLL…RFQPFLHLHL (176 aa)). Residues 65–72 (RGGDVTYH), 132–134 (SIG), and 145–147 (GFA) contribute to the substrate site. Cys163 acts as the Acyl-thioester intermediate in catalysis.

Belongs to the LipB family.

It is found in the cytoplasm. The catalysed reaction is octanoyl-[ACP] + L-lysyl-[protein] = N(6)-octanoyl-L-lysyl-[protein] + holo-[ACP] + H(+). It participates in protein modification; protein lipoylation via endogenous pathway; protein N(6)-(lipoyl)lysine from octanoyl-[acyl-carrier-protein]: step 1/2. Functionally, catalyzes the transfer of endogenously produced octanoic acid from octanoyl-acyl-carrier-protein onto the lipoyl domains of lipoate-dependent enzymes. Lipoyl-ACP can also act as a substrate although octanoyl-ACP is likely to be the physiological substrate. The sequence is that of Octanoyltransferase from Geobacter sp. (strain M21).